The chain runs to 284 residues: Avenin-like b8 (284 aa).

An N-terminal signal peptide occupies residues 1–18; it reads MKVFILALLALAATTAIA.

This sequence belongs to the prolamin family. In terms of processing, contains disulfide bonds.

Seed storage protein. Might be integrated via inter-chain disulfide bonds within the glutenin polymer. This chain is Avenin-like b8, found in Triticum aestivum (Wheat).